The primary structure comprises 157 residues: DNA gyrase inhibitor (157 aa).

This sequence belongs to the DNA gyrase inhibitor family. As to quaternary structure, interacts with DNA gyrase.

The protein localises to the cytoplasm. Inhibits the supercoiling activity of DNA gyrase. Acts by inhibiting DNA gyrase at an early step, prior to (or at the step of) binding of DNA by the gyrase. It protects cells against toxins that target DNA gyrase, by inhibiting activity of these toxins and reducing the formation of lethal double-strand breaks in the cell. This is DNA gyrase inhibitor from Klebsiella pneumoniae (strain 342).